Here is an 83-residue protein sequence, read N- to C-terminus: Mu-theraphotoxin-Hhn2n (83 aa).

The signal sequence occupies residues 1–21 (MKASMYLALAGLVLLFVVGYA). Residues 22-48 (SESEEKEFPRELLSKIFAVDDFKGEER) constitute a propeptide that is removed on maturation. Intrachain disulfides connect C50–C65, C57–C70, and C64–C77. A Leucine amide modification is found at L81.

It belongs to the neurotoxin 10 (Hwtx-1) family. 15 (Hntx-3) subfamily. In terms of assembly, monomer. In terms of tissue distribution, expressed by the venom gland.

The protein localises to the secreted. Functionally, lethal neurotoxin. Selectively blocks tetrodotoxin-sensitive voltage-gated sodium channels (Nav). Does not affect tetrodotoxin-resistant voltage-gated sodium channels or calcium channels. This Cyriopagopus hainanus (Chinese bird spider) protein is Mu-theraphotoxin-Hhn2n.